We begin with the raw amino-acid sequence, 318 residues long: MGARGALLLALLLARAGLGKPGELGALQAGPGAARRPGGGGREEACGHREIHALVAGGVESARGRWPWQASLRLRRRHRCGGSLLSRRWVLSAAHCFQKHYYPSEWTVQLGELTSRPTPWNLRAYSSRYKVQDIIVNPDALGVLRNDIALLRLASSVTYNAYIQPICIESSTFNFVHRPDCWVTGWGLISPSGTPLPPPYNLREAQVTILNNTRCNYLFEQPSSRSMIWDSMFCAGAEDGSVDTCKGDSGGPLVCDKDGLWYQVGIVSWGMDCGQPNRPGVYTNISVYFHWIRRVMSHSTPRPNPSQLLLLLALLWAP.

The first 19 residues, 1–19 (MGARGALLLALLLARAGLG), serve as a signal peptide directing secretion. Residues 20 to 54 (KPGELGALQAGPGAARRPGGGGREEACGHREIHAL) constitute a propeptide that is removed on maturation. Residues 55 to 297 (VAGGVESARG…YFHWIRRVMS (243 aa)) form the Peptidase S1 domain. C80 and C96 are joined by a disulfide. Residues H95 and D147 each act as charge relay system in the active site. Intrachain disulfides connect C181/C255, C215/C234, and C245/C273. N-linked (GlcNAc...) asparagine glycosylation occurs at N211. The active-site Charge relay system is S249. N284 carries an N-linked (GlcNAc...) asparagine glycan. S299 carries GPI-anchor amidated serine lipidation. Positions 300–318 (TPRPNPSQLLLLLALLWAP) are cleaved as a propeptide — removed in mature form.

Belongs to the peptidase S1 family. In terms of processing, N-glycosylated.

It is found in the cell membrane. In Homo sapiens (Human), this protein is Serine protease 41.